Consider the following 138-residue polypeptide: Ribosome-binding factor A (138 aa).

The disordered stretch occupies residues Glu112–Glu138. Residues Ala119–Ala131 show a composition bias toward low complexity.

It belongs to the RbfA family. In terms of assembly, monomer. Binds 30S ribosomal subunits, but not 50S ribosomal subunits or 70S ribosomes.

It localises to the cytoplasm. In terms of biological role, one of several proteins that assist in the late maturation steps of the functional core of the 30S ribosomal subunit. Associates with free 30S ribosomal subunits (but not with 30S subunits that are part of 70S ribosomes or polysomes). Required for efficient processing of 16S rRNA. May interact with the 5'-terminal helix region of 16S rRNA. This is Ribosome-binding factor A from Anaeromyxobacter sp. (strain K).